Reading from the N-terminus, the 298-residue chain is Probable protein phosphatase 2C 26 (298 aa).

The PPM-type phosphatase domain maps to 48-295 (SVGIHAIPHP…DDVTVIVAKV (248 aa)). D82, G83, D213, and D286 together coordinate Mn(2+).

This sequence belongs to the PP2C family. It depends on Mg(2+) as a cofactor. Mn(2+) serves as cofactor.

The catalysed reaction is O-phospho-L-seryl-[protein] + H2O = L-seryl-[protein] + phosphate. It carries out the reaction O-phospho-L-threonyl-[protein] + H2O = L-threonyl-[protein] + phosphate. The sequence is that of Probable protein phosphatase 2C 26 from Arabidopsis thaliana (Mouse-ear cress).